A 346-amino-acid polypeptide reads, in one-letter code: MQPIRYRTDLTPYNTFGLHAQARAFIALKHADELRDIVRLPEFDRDTVLWLGGGSNILLMQDYDGLVVHMENKGIREIARSDGMVLIEAQAGEIWHDFVLHTVALGLSGLENLSLIPGTVGASPVQNIGAYGVEAKDVIHSVRCFDLDTETFVTLSNADCRFAYRESLFKQEGKGRYVIVSVVFALKTHFVPNLGYGDLAAKVAELSAGREATAKDVSDAVSAIRNSKLPDPKVLGNVGSFFKNPVVSAEKAATLLQRHPDMPRYPQPDGSVKLAAGWLIDQCRLKGFQIGGAAVHDKQALVLVNKNNASANDVRQLAQHIKFTVFARFQVELHAEPNWLPTSFSL.

The FAD-binding PCMH-type domain occupies 18-189 (LHAQARAFIA…VSVVFALKTH (172 aa)). Arginine 165 is a catalytic residue. Serine 240 serves as the catalytic Proton donor. Residue glutamate 336 is part of the active site.

It belongs to the MurB family. Requires FAD as cofactor.

The protein resides in the cytoplasm. It catalyses the reaction UDP-N-acetyl-alpha-D-muramate + NADP(+) = UDP-N-acetyl-3-O-(1-carboxyvinyl)-alpha-D-glucosamine + NADPH + H(+). It participates in cell wall biogenesis; peptidoglycan biosynthesis. Its function is as follows. Cell wall formation. This Neisseria gonorrhoeae (strain ATCC 700825 / FA 1090) protein is UDP-N-acetylenolpyruvoylglucosamine reductase.